The sequence spans 274 residues: HTH-type transcriptional regulator GadX (274 aa).

Positions 145 to 242 (TRVCTVINNN…GMTPTEYQER (98 aa)) constitute an HTH araC/xylS-type domain. 2 consecutive DNA-binding regions (H-T-H motif) follow at residues 162 to 183 (ARIASELLMSPSLLKKKLREEE) and 209 to 232 (IKRVAVSCGYHSVSYFIYVFRNYY).

Homodimer.

Positively regulates the expression of about fifteen genes involved in acid resistance such as gadA, gadB and gadC. Depending on the conditions (growth phase and medium), can repress gadW. In Escherichia coli (strain K12), this protein is HTH-type transcriptional regulator GadX (gadX).